A 474-amino-acid chain; its full sequence is Viral protein TPX (474 aa).

Positions 268 to 474 (VTVTPISSPS…TPTSTTSSNI (207 aa)) are disordered. Residues 275–365 (SPSPTPTPTP…PTPTPTPTPT (91 aa)) are compositionally biased toward pro residues. The stretch at 278 to 367 (PTPTPTPTPT…PTPTPTPTPT (90 aa)) is one Thr-Pro(N) repeat. The segment at 278–467 (PTPTPTPTPT…PTPTPTPTPT (190 aa)) is 3 Thr-Pro repeats regions and two near identical repeats. A repeat spans 368–377 (YDITYVVFDV). One copy of the Thr-Pro(N) repeat lies at 378 to 436 (TPSPTPTPTPTPTPTPTPTPTPTPTPTPTPTPTPTPTPTPTPTPTPTPTPTPTPTPTPT). The span at 380–434 (SPTPTPTPTPTPTPTPTPTPTPTPTPTPTPTPTPTPTPTPTPTPTPTPTPTPTPT) shows a compositional bias: pro residues. The segment at residues 437–446 (YDITYVIFDV) is a repeat. The Thr-Pro(N) repeat unit spans residues 447-467 (TPSPTPTPTPTPTPTPTPTPT). A compositionally biased stretch (pro residues) spans 449 to 465 (SPTPTPTPTPTPTPTPT).

This Thermoproteus tenax virus 1 (strain VT3) (TTV1) protein is Viral protein TPX.